The primary structure comprises 473 residues: Photosystem II CP43 reaction center protein (473 aa).

Positions 1–14 (MKILYSLRRFYHVE) are excised as a propeptide. Position 15 is an N-acetylthreonine (Thr-15). Residue Thr-15 is modified to Phosphothreonine. 5 consecutive transmembrane segments (helical) span residues 69–93 (LFEV…PHLA), 134–155 (LLGP…KDRN), 178–200 (KALY…RKIT), 255–275 (KPFA…LSYS), and 291–312 (WFNN…ASQA). Glu-367 contacts [CaMn4O5] cluster. Residues 447–471 (RARAAAAGFEKGIDRDLEPVLYMTP) form a helical membrane-spanning segment.

The protein belongs to the PsbB/PsbC family. PsbC subfamily. In terms of assembly, PSII is composed of 1 copy each of membrane proteins PsbA, PsbB, PsbC, PsbD, PsbE, PsbF, PsbH, PsbI, PsbJ, PsbK, PsbL, PsbM, PsbT, PsbX, PsbY, PsbZ, Psb30/Ycf12, at least 3 peripheral proteins of the oxygen-evolving complex and a large number of cofactors. It forms dimeric complexes. Requires Binds multiple chlorophylls and provides some of the ligands for the Ca-4Mn-5O cluster of the oxygen-evolving complex. It may also provide a ligand for a Cl- that is required for oxygen evolution. PSII binds additional chlorophylls, carotenoids and specific lipids. as cofactor.

It is found in the plastid. Its subcellular location is the chloroplast thylakoid membrane. Its function is as follows. One of the components of the core complex of photosystem II (PSII). It binds chlorophyll and helps catalyze the primary light-induced photochemical processes of PSII. PSII is a light-driven water:plastoquinone oxidoreductase, using light energy to abstract electrons from H(2)O, generating O(2) and a proton gradient subsequently used for ATP formation. This Oryza nivara (Indian wild rice) protein is Photosystem II CP43 reaction center protein.